The primary structure comprises 428 residues: GTPase Obg (428 aa).

Residues 1 to 158 form the Obg domain; the sequence is MFVDQVKIYV…RDVILELKVL (158 aa). The OBG-type G domain maps to 159–329; the sequence is ADVGLVGFPS…LLFEVANLIE (171 aa). GTP contacts are provided by residues 165-172, 190-194, 212-215, 282-285, and 310-312; these read GFPSVGKS, FTTIV, DLPG, NKMD, and SAV. Residues Ser172 and Thr192 each contribute to the Mg(2+) site. An OCT domain is found at 350 to 428; the sequence is KFDTEGVKFE…ILEYEFEFID (79 aa).

The protein belongs to the TRAFAC class OBG-HflX-like GTPase superfamily. OBG GTPase family. Monomer. Mg(2+) is required as a cofactor.

It localises to the cytoplasm. In terms of biological role, an essential GTPase which binds GTP, GDP and possibly (p)ppGpp with moderate affinity, with high nucleotide exchange rates and a fairly low GTP hydrolysis rate. Plays a role in control of the cell cycle, stress response, ribosome biogenesis and in those bacteria that undergo differentiation, in morphogenesis control. The chain is GTPase Obg from Bacillus cereus (strain B4264).